Consider the following 215-residue polypeptide: Probable phosphoglycerate mutase GpmB (215 aa).

Residues 8-15 (RHGETQWN), 21-22 (QG), R58, R60, 82-85 (ELNM), 104-105 (RR), and 151-152 (GI) contribute to the substrate site. H9 (tele-phosphohistidine intermediate) is an active-site residue. E82 functions as the Proton donor/acceptor in the catalytic mechanism.

The protein belongs to the phosphoglycerate mutase family. GpmB subfamily.

It catalyses the reaction (2R)-2-phosphoglycerate = (2R)-3-phosphoglycerate. It participates in carbohydrate degradation; glycolysis; pyruvate from D-glyceraldehyde 3-phosphate: step 3/5. In Escherichia coli O9:H4 (strain HS), this protein is Probable phosphoglycerate mutase GpmB.